Here is a 311-residue protein sequence, read N- to C-terminus: Forkhead box protein R2 (311 aa).

Disordered stretches follow at residues 56–76 and 90–171; these read PPEMPQKRRPSPDGDGPPCEP and LGSQ…QSPE. Residues 115–128 are compositionally biased toward basic and acidic residues; sequence QKDEGSNCSEDKVV. Residues 129 to 143 show a composition bias toward low complexity; that stretch reads ESLPSSSSEQSPLQK. Over residues 153–164 the composition is skewed to acidic residues; that stretch reads ELTEEEAEEPDD. Positions 192–294 form a DNA-binding region, fork-head; sequence RPPLNCSHLI…RVLAFAQRER (103 aa).

As to expression, expressed in breast cancer cell lines and primary cancer.

It is found in the nucleus. In Homo sapiens (Human), this protein is Forkhead box protein R2 (FOXR2).